The sequence spans 461 residues: Vimentin (461 aa).

2 stretches are compositionally biased toward low complexity: residues 1–14 (MNRTTSRQTTSSSS) and 35–52 (SSRQYSSPVRSSRMSYSV). Positions 1-52 (MNRTTSRQTTSSSSYKRMFGGEGRPSVGMARSTLSSRQYSSPVRSSRMSYSV) are disordered. Residues 1–91 (MNRTTSRQTT…FALSDAINSE (91 aa)) form a head region. The tract at residues 92 to 127 (FKANRTNEKAEMQHLNDRFASYIDKVRFLEQQNKIL) is coil 1A. Residues 92 to 127 (FKANRTNEKAEMQHLNDRFASYIDKVRFLEQQNKIL) are a coiled coil. In terms of domain architecture, IF rod spans 99-407 (EKAEMQHLND…KLLEGEESRI (309 aa)). A linker 1 region spans residues 128–149 (LAELEQLKGKGASRIGDLYEDE). The stretch at 150–241 (MRDLRRQVDQ…KLHDEEVAEL (92 aa)) forms a coiled coil. Residues 150-241 (MRDLRRQVDQ…KLHDEEVAEL (92 aa)) form a coil 1B region. Positions 242-264 (QAQIQDQHVQIDMDVAKPDLTAA) are linker 12. The tract at residues 265–403 (LRDVRVQYET…ATYRKLLEGE (139 aa)) is coil 2. A coiled-coil region spans residues 299–403 (NRNTDAIRQA…ATYRKLLEGE (105 aa)). The segment at 404 to 461 (ESRITTPMPNFSSFNLRESMLEARPMIDNLSKKVVIKTIETRDGHVINESTQNHDDLE) is tail.

It belongs to the intermediate filament family. Homomer assembled from elementary dimers. Post-translationally, one of the most prominent phosphoproteins in various cells of mesenchymal origin. Phosphorylation is enhanced during cell division, at which time vimentin filaments are significantly reorganized.

Its subcellular location is the cytoplasm. The protein localises to the cytoskeleton. The protein resides in the nucleus matrix. Functionally, vimentins are class-III intermediate filaments found in various non-epithelial cells, especially mesenchymal cells. Vimentin is attached to the nucleus, endoplasmic reticulum, and mitochondria, either laterally or terminally. The sequence is that of Vimentin (vim) from Oncorhynchus mykiss (Rainbow trout).